A 650-amino-acid polypeptide reads, in one-letter code: Chaperone protein DnaK (650 aa).

Thr-200 is modified (phosphothreonine; by autocatalysis). A compositionally biased stretch (low complexity) spans 612–636 (QQAGAAGAAGAAEGAAHAGGAQQAA). A disordered region spans residues 612-650 (QQAGAAGAAGAAEGAAHAGGAQQAADDVVDAEFKEVKKD).

The protein belongs to the heat shock protein 70 family.

Its function is as follows. Acts as a chaperone. The sequence is that of Chaperone protein DnaK from Burkholderia ambifaria (strain ATCC BAA-244 / DSM 16087 / CCUG 44356 / LMG 19182 / AMMD) (Burkholderia cepacia (strain AMMD)).